Consider the following 318-residue polypeptide: Aspartate carbamoyltransferase catalytic subunit (318 aa).

Positions 58 and 59 each coordinate carbamoyl phosphate. K86 contacts L-aspartate. The carbamoyl phosphate site is built by R108, H141, and Q144. L-aspartate-binding residues include R174 and R226. Positions 270 and 271 each coordinate carbamoyl phosphate.

It belongs to the aspartate/ornithine carbamoyltransferase superfamily. ATCase family. Heterododecamer (2C3:3R2) of six catalytic PyrB chains organized as two trimers (C3), and six regulatory PyrI chains organized as three dimers (R2).

The catalysed reaction is carbamoyl phosphate + L-aspartate = N-carbamoyl-L-aspartate + phosphate + H(+). The protein operates within pyrimidine metabolism; UMP biosynthesis via de novo pathway; (S)-dihydroorotate from bicarbonate: step 2/3. Catalyzes the condensation of carbamoyl phosphate and aspartate to form carbamoyl aspartate and inorganic phosphate, the committed step in the de novo pyrimidine nucleotide biosynthesis pathway. The chain is Aspartate carbamoyltransferase catalytic subunit from Lactobacillus gasseri (strain ATCC 33323 / DSM 20243 / BCRC 14619 / CIP 102991 / JCM 1131 / KCTC 3163 / NCIMB 11718 / NCTC 13722 / AM63).